The primary structure comprises 612 residues: Phragmoplastin DRP1D (612 aa).

Met1 carries the N-acetylmethionine modification. In terms of domain architecture, Dynamin-type G spans 32 to 301; that stretch reads WEALPSVAVV…LESVIRSRIP (270 aa). The interval 42-49 is G1 motif; sequence GGQSSGKS. 45–50 is a GTP binding site; sequence SSGKSS. The interval 68 to 70 is G2 motif; it reads VTR. The G3 motif stretch occupies residues 143–146; that stretch reads DLPG. The interval 212–215 is G4 motif; that stretch reads TKLD. Residues 213–218 and 243–246 each bind GTP; these read KLDLMD and NRSQ. Positions 242–245 are G5 motif; the sequence is VNRS. Residues 520 to 612 form the GED domain; sequence FRKIASNVAA…DEIDAAVWVR (93 aa).

The protein belongs to the TRAFAC class dynamin-like GTPase superfamily. Dynamin/Fzo/YdjA family. Forms homodimer and may homooligomerize and heterooligomerize to form the phragmoplastin complex. Binds to PHIP1.

Its subcellular location is the cytoplasm. It localises to the cytoskeleton. The catalysed reaction is GTP + H2O = GDP + phosphate + H(+). Putative microtubule-associated force-producing protein. Has a GTPase activity. The chain is Phragmoplastin DRP1D from Arabidopsis thaliana (Mouse-ear cress).